The following is a 152-amino-acid chain: Deoxyuridine 5'-triphosphate nucleotidohydrolase (152 aa).

Residues 71-73 (RSG), N84, and 88-90 (LID) contribute to the substrate site.

It belongs to the dUTPase family. It depends on Mg(2+) as a cofactor.

It catalyses the reaction dUTP + H2O = dUMP + diphosphate + H(+). It participates in pyrimidine metabolism; dUMP biosynthesis; dUMP from dCTP (dUTP route): step 2/2. Its function is as follows. This enzyme is involved in nucleotide metabolism: it produces dUMP, the immediate precursor of thymidine nucleotides and it decreases the intracellular concentration of dUTP so that uracil cannot be incorporated into DNA. This Xanthomonas campestris pv. campestris (strain 8004) protein is Deoxyuridine 5'-triphosphate nucleotidohydrolase.